The following is a 161-amino-acid chain: Probable chemoreceptor glutamine deamidase CheD (161 aa).

This sequence belongs to the CheD family.

It catalyses the reaction L-glutaminyl-[protein] + H2O = L-glutamyl-[protein] + NH4(+). Its function is as follows. Probably deamidates glutamine residues to glutamate on methyl-accepting chemotaxis receptors (MCPs), playing an important role in chemotaxis. This is Probable chemoreceptor glutamine deamidase CheD from Lachnoclostridium phytofermentans (strain ATCC 700394 / DSM 18823 / ISDg) (Clostridium phytofermentans).